A 125-amino-acid chain; its full sequence is Small ribosomal subunit protein uS13 (125 aa).

The interval 92-125 (RRSLPARGQNTQTNARTRKGRRKTVAGKKKAVKK) is disordered. The segment covering 107 to 125 (RTRKGRRKTVAGKKKAVKK) has biased composition (basic residues).

The protein belongs to the universal ribosomal protein uS13 family. Part of the 30S ribosomal subunit. Forms a loose heterodimer with protein S19. Forms two bridges to the 50S subunit in the 70S ribosome.

Located at the top of the head of the 30S subunit, it contacts several helices of the 16S rRNA. In the 70S ribosome it contacts the 23S rRNA (bridge B1a) and protein L5 of the 50S subunit (bridge B1b), connecting the 2 subunits; these bridges are implicated in subunit movement. Contacts the tRNAs in the A and P-sites. The protein is Small ribosomal subunit protein uS13 of Chlorobium phaeobacteroides (strain BS1).